An 887-amino-acid chain; its full sequence is ABC transporter A family member 10 (887 aa).

7 consecutive transmembrane segments (helical) span residues 38 to 58, 198 to 218, 245 to 265, 277 to 297, 309 to 329, 335 to 355, and 376 to 396; these read GIQY…VITL, YLYV…LLVT, IIIV…VVLY, VMLF…GIIL, AISS…QFYL, SSWL…EFLY, and ISFL…WYIT. The segment covering 443–469 has biased composition (low complexity); that stretch reads NNCNNNNTSPSSSSSSQSSPLNKPLLS. Positions 443 to 474 are disordered; it reads NNCNNNNTSPSSSSSSQSSPLNKPLLSGDSDD. The ABC transporter domain maps to 481 to 728; the sequence is IRLVNLKKTY…FNLGYILTIV (248 aa). 519 to 526 lines the ATP pocket; sequence GQNGSGKT. The segment covering 774–797 has biased composition (low complexity); that stretch reads NNNNNENNSNNSDGSSSSSDSSSS. The interval 774 to 799 is disordered; sequence NNNNNENNSNNSDGSSSSSDSSSSKD.

It belongs to the ABC transporter superfamily. ABCA family.

Its subcellular location is the membrane. The chain is ABC transporter A family member 10 (abcA10) from Dictyostelium discoideum (Social amoeba).